The chain runs to 1187 residues: Phospholipid-transporting ATPase IH (1187 aa).

Residues 1–61 (MDCSLLRTLV…SSKYTFWNFI (61 aa)) are Cytoplasmic-facing. Residues 62-82 (PKNLFEQFRRIANFYFLIIFL) traverse the membrane as a helical segment. Residues 83-88 (VQLIID) are Extracellular-facing. Residues 89 to 110 (TPTSPVTSGLPLFFVITVTAIK) traverse the membrane as a helical segment. At 111-296 (QGYEDWLRHK…SAVEKSMNTF (186 aa)) the chain is on the cytoplasmic side. A helical transmembrane segment spans residues 297 to 318 (LIVYLCILVSKALINTVLKYVW). The Extracellular segment spans residues 319–349 (QSEPFRDEPWYNEKTESERQRNLFLRAFTDF). A helical transmembrane segment spans residues 350–372 (LAFMVLFNYIIPVSMYVTVEMQK). The Cytoplasmic portion of the chain corresponds to 373-884 (FLGSYFITWD…GHFYYIRISE (512 aa)). The active-site 4-aspartylphosphate intermediate is D414. The ATP site is built by D414, K415, T416, E513, F555, K578, R609, T689, G690, and D691. Residue D414 participates in Mg(2+) binding. T416 contributes to the Mg(2+) binding site. S740 bears the Phosphoserine mark. ATP-binding residues include R801 and K807. D828 serves as a coordination point for Mg(2+). Positions 831 and 832 each coordinate ATP. D832 serves as a coordination point for Mg(2+). A helical transmembrane segment spans residues 885 to 905 (LVQYFFYKNVCFIFPQFLYQF). Residues 906 to 917 (FCGFSQQTLYDT) are Extracellular-facing. A helical transmembrane segment spans residues 918–937 (AYLTLYNISFTSLPILLYSL). At 938-967 (MEQHVGIDVLKRDPTLYRDIAKNALLRWRV) the chain is on the cytoplasmic side. Residues 968–989 (FIYWTFLGVFDALVFFFGAYFI) traverse the membrane as a helical segment. Residues 990–1003 (FENTTVTINGQMFG) are Extracellular-facing. A helical transmembrane segment spans residues 1004 to 1026 (NWTFGTLVFTVMVLTVTLKLALD). Residues 1027–1032 (THYWTW) are Cytoplasmic-facing. A helical transmembrane segment spans residues 1033–1053 (INHFVIWGSLLFYIAFSLLWG). The Extracellular portion of the chain corresponds to 1054–1071 (GVIWPFLSYQRMYYVFIS). Residues 1072-1096 (MLSSGPAWLGIILLVTVGLLPDVLK) traverse the membrane as a helical segment. Topologically, residues 1097–1138 (KVLCRQLWPTATERTQNIQHQDSISEFTPLASLPSWGAQGSR) are cytoplasmic. Phosphoserine is present on residues S1148 and S1158.

The protein belongs to the cation transport ATPase (P-type) (TC 3.A.3) family. Type IV subfamily. Component of a P4-ATPase flippase complex which consists of a catalytic alpha subunit ATP11A and an accessory beta subunit TMEM30A. Mg(2+) is required as a cofactor. Post-translationally, proteolytically cleaved by CASP3. Widely expressed. Expressed in myoblasts. Expressed in retina, brain, liver, testes and kidney (at protein level). Expressed in the inner ear.

It localises to the cell membrane. The protein localises to the early endosome. The protein resides in the recycling endosome. It is found in the endoplasmic reticulum membrane. The catalysed reaction is ATP + H2O + phospholipidSide 1 = ADP + phosphate + phospholipidSide 2.. It carries out the reaction a 1,2-diacyl-sn-glycero-3-phospho-L-serine(out) + ATP + H2O = a 1,2-diacyl-sn-glycero-3-phospho-L-serine(in) + ADP + phosphate + H(+). The enzyme catalyses a 1,2-diacyl-sn-glycero-3-phosphoethanolamine(out) + ATP + H2O = a 1,2-diacyl-sn-glycero-3-phosphoethanolamine(in) + ADP + phosphate + H(+). Its function is as follows. Catalytic component of a P4-ATPase flippase complex which catalyzes the hydrolysis of ATP coupled to the transport of aminophospholipids, phosphatidylserines (PS) and phosphatidylethanolamines (PE), from the outer to the inner leaflet of the plasma membrane. Does not show flippase activity toward phosphatidylcholine (PC). Contributes to the maintenance of membrane lipid asymmetry with a specific role in morphogenesis of muscle cells. In myoblasts, mediates PS enrichment at the inner leaflet of plasma membrane, triggering PIEZO1-dependent Ca2+ influx and Rho GTPases signal transduction, subsequently leading to the assembly of cortical actomyosin fibers and myotube formation. The sequence is that of Phospholipid-transporting ATPase IH (Atp11a) from Mus musculus (Mouse).